Reading from the N-terminus, the 226-residue chain is Thiamine-phosphate synthase (226 aa).

Residues 46–50 (QFRDK) and Asp83 contribute to the 4-amino-2-methyl-5-(diphosphooxymethyl)pyrimidine site. Asp84 and Asp103 together coordinate Mg(2+). Ser122 lines the 4-amino-2-methyl-5-(diphosphooxymethyl)pyrimidine pocket. Residue 149–151 (TQS) participates in 2-[(2R,5Z)-2-carboxy-4-methylthiazol-5(2H)-ylidene]ethyl phosphate binding. Lys152 serves as a coordination point for 4-amino-2-methyl-5-(diphosphooxymethyl)pyrimidine. Residues Gly181 and 201–202 (IT) contribute to the 2-[(2R,5Z)-2-carboxy-4-methylthiazol-5(2H)-ylidene]ethyl phosphate site.

Belongs to the thiamine-phosphate synthase family. The cofactor is Mg(2+).

It carries out the reaction 2-[(2R,5Z)-2-carboxy-4-methylthiazol-5(2H)-ylidene]ethyl phosphate + 4-amino-2-methyl-5-(diphosphooxymethyl)pyrimidine + 2 H(+) = thiamine phosphate + CO2 + diphosphate. The catalysed reaction is 2-(2-carboxy-4-methylthiazol-5-yl)ethyl phosphate + 4-amino-2-methyl-5-(diphosphooxymethyl)pyrimidine + 2 H(+) = thiamine phosphate + CO2 + diphosphate. It catalyses the reaction 4-methyl-5-(2-phosphooxyethyl)-thiazole + 4-amino-2-methyl-5-(diphosphooxymethyl)pyrimidine + H(+) = thiamine phosphate + diphosphate. The protein operates within cofactor biosynthesis; thiamine diphosphate biosynthesis; thiamine phosphate from 4-amino-2-methyl-5-diphosphomethylpyrimidine and 4-methyl-5-(2-phosphoethyl)-thiazole: step 1/1. Functionally, condenses 4-methyl-5-(beta-hydroxyethyl)thiazole monophosphate (THZ-P) and 2-methyl-4-amino-5-hydroxymethyl pyrimidine pyrophosphate (HMP-PP) to form thiamine monophosphate (TMP). This Haemophilus influenzae (strain 86-028NP) protein is Thiamine-phosphate synthase.